The sequence spans 57 residues: Large ribosomal subunit protein bL32 (57 aa).

The protein belongs to the bacterial ribosomal protein bL32 family.

The chain is Large ribosomal subunit protein bL32 from Bacillus licheniformis (strain ATCC 14580 / DSM 13 / JCM 2505 / CCUG 7422 / NBRC 12200 / NCIMB 9375 / NCTC 10341 / NRRL NRS-1264 / Gibson 46).